Consider the following 481-residue polypeptide: Trigger factor (481 aa).

The PPIase FKBP-type domain maps to 174–261; the sequence is GDIAVVGFKG…LKDLKTRELP (88 aa). The segment at 430–481 is disordered; sequence ENSTVTEKAPEAESDAAKASKPAAAKKDASKAKTAKTSKAKTAKAESESAES. Over residues 437–447 the composition is skewed to basic and acidic residues; sequence KAPEAESDAAK. Residues 462–471 show a composition bias toward basic residues; it reads KTAKTSKAKT. Over residues 472-481 the composition is skewed to basic and acidic residues; it reads AKAESESAES.

It belongs to the FKBP-type PPIase family. Tig subfamily.

Its subcellular location is the cytoplasm. The catalysed reaction is [protein]-peptidylproline (omega=180) = [protein]-peptidylproline (omega=0). Functionally, involved in protein export. Acts as a chaperone by maintaining the newly synthesized protein in an open conformation. Functions as a peptidyl-prolyl cis-trans isomerase. The sequence is that of Trigger factor from Synechococcus sp. (strain WH7803).